Consider the following 620-residue polypeptide: E3 ubiquitin-protein ligase DTX1 (620 aa).

WWE domains are found at residues 14 to 94 and 95 to 171; these read GLGF…PVRR and NFYD…RLRR. Disordered regions lie at residues 221–248, 262–313, and 361–391; these read SQRR…LAVR, PAAG…SIPP, and PPVS…KSKN. Pro residues-rich tracts occupy residues 227-241 and 268-280; these read PPAP…PGGP and EPAP…PRSP. Residues 230 to 233 carry the SH3-binding motif; that stretch reads PPLP. The span at 291-307 shows a compositional bias: polar residues; the sequence is QNNLNRPGPQRTTSVSA. Basic residues predominate over residues 379-389; sequence RKTKKKHLKKS. The RING-type zinc finger occupies 411 to 472; it reads CTICMERLVT…DGSLQCPTCK (62 aa).

It belongs to the Deltex family. Homodimer. May form a heterodimer with other members of the Deltex family. Interacts with NOTCH1 via its N-terminal region and EIF3F, the interaction is required for NOTCH1 deubiquitination. Interacts with EP300. Forms a heterodimer with BBAP; the heterodimerization leading to an increase of in vitro ubiquitin ligase activity. Interacts with ITCH. Ubiquitinated; undergoes 'Lys-29'-linked polyubiquitination catalyzed by ITCH. In terms of tissue distribution, widely expressed. Strongly expressed in blood vessel. Also expressed in embryonic nervous system, pancreas, lung, adrenal gland, digestive tube and muscles. Expressed in MZB cells and developing B- and T-cells.

It is found in the cytoplasm. Its subcellular location is the nucleus. The enzyme catalyses S-ubiquitinyl-[E2 ubiquitin-conjugating enzyme]-L-cysteine + [acceptor protein]-L-lysine = [E2 ubiquitin-conjugating enzyme]-L-cysteine + N(6)-ubiquitinyl-[acceptor protein]-L-lysine.. It participates in protein modification; protein ubiquitination. Its function is as follows. Functions as a ubiquitin ligase protein in vivo, mediating ubiquitination and promoting degradation of MEKK1, suggesting that it may regulate the Notch pathway via some ubiquitin ligase activity. Regulator of Notch signaling, a signaling pathway involved in cell-cell communications that regulates a broad spectrum of cell-fate determinations. Mainly acts as a positive regulator of Notch, but it also acts as a negative regulator, depending on the developmental and cell context. Mediates the antineural activity of Notch, possibly by inhibiting the transcriptional activation mediated by MATCH1. Involved in neurogenesis, lymphogenesis and myogenesis, and may also be involved in MZB (Marginal zone B) cell differentiation. Promotes B-cell development at the expense of T-cell development, suggesting that it can antagonize NOTCH1. The chain is E3 ubiquitin-protein ligase DTX1 (DTX1) from Homo sapiens (Human).